The chain runs to 230 residues: Large ribosomal subunit protein uL1 (230 aa).

This sequence belongs to the universal ribosomal protein uL1 family. Part of the 50S ribosomal subunit.

In terms of biological role, binds directly to 23S rRNA. The L1 stalk is quite mobile in the ribosome, and is involved in E site tRNA release. Its function is as follows. Protein L1 is also a translational repressor protein, it controls the translation of the L11 operon by binding to its mRNA. The protein is Large ribosomal subunit protein uL1 of Rhodopseudomonas palustris (strain BisA53).